Consider the following 271-residue polypeptide: Solute carrier family 66 member 2 (271 aa).

The next 3 membrane-spanning stretches (helical) occupy residues 7–27 (GWLL…AMVF), 49–69 (FSTH…LFWF), and 72–92 (HFES…LLML). The region spanning 14 to 80 (HQLVSWVAAG…RHFESPLLWQ (67 aa)) is the PQ-loop 1 domain. Residue S110 is modified to Phosphoserine. 3 helical membrane passes run 145-165 (DYVQ…YLSI), 168-188 (ALFV…LGVP), and 232-252 (VCGL…YAFA). The region spanning 178–233 (AVLTEAMLGVPQLYRNYCHRSTEGMSLKMVLMWTSGDTFKTAYFLLNGAPLQFSVC) is the PQ-loop 2 domain.

It is found in the membrane. The protein is Solute carrier family 66 member 2 (Slc66a2) of Mus musculus (Mouse).